The primary structure comprises 475 residues: Ribulose bisphosphate carboxylase large chain (475 aa).

A propeptide spanning residues 1–2 (MS) is cleaved from the precursor. An N-acetylproline modification is found at proline 3. Substrate is bound by residues threonine 65, asparagine 123, and threonine 173. The active-site Proton acceptor is the lysine 175. Lysine 177 provides a ligand contact to substrate. Mg(2+) is bound by residues lysine 201, aspartate 203, and glutamate 204. At lysine 201 the chain carries N6-carboxylysine. Residues glutamate 204, histidine 294, arginine 295, histidine 327, lysine 334, serine 379, glycine 381, glycine 403, and glycine 404 each contribute to the substrate site. The active-site Proton acceptor is histidine 294.

This sequence belongs to the RuBisCO large chain family. Type I subfamily. In terms of assembly, heterohexadecamer of 8 large chains and 8 small chains. Mg(2+) serves as cofactor. In terms of processing, the disulfide bond which can form between Cys-247 in the large chain dimeric partners within the hexadecamer appears to be associated with oxidative stress and protein turnover. The disulfide bonds reported in 1RBO may be the result of oxidation during crystallization.

Its subcellular location is the plastid. The protein localises to the chloroplast. The catalysed reaction is 2 (2R)-3-phosphoglycerate + 2 H(+) = D-ribulose 1,5-bisphosphate + CO2 + H2O. It carries out the reaction D-ribulose 1,5-bisphosphate + O2 = 2-phosphoglycolate + (2R)-3-phosphoglycerate + 2 H(+). With respect to regulation, abscisic acid (ABA) causes weak inhibition of RuBisCO catalytic activity, but more potent inhibition of RuBisCO activation. RuBisCO catalyzes two reactions: the carboxylation of D-ribulose 1,5-bisphosphate, the primary event in carbon dioxide fixation, as well as the oxidative fragmentation of the pentose substrate in the photorespiration process. Both reactions occur simultaneously and in competition at the same active site. Binds to abscisic acid (ABA) which has weakly inhibits carboxylation and more strongly inhibits enzyme activation. The chain is Ribulose bisphosphate carboxylase large chain from Spinacia oleracea (Spinach).